The following is a 527-amino-acid chain: UPF0053 protein YegH (527 aa).

Transmembrane regions (helical) follow at residues 14–34, 51–71, 81–101, 145–165, and 185–205; these read ITLI…IAIL, LLLA…LVTL, FTFS…LFKA, ITAV…VIAI, and IVIL…AEGF. CBS domains are found at residues 306-366 and 371-429; these read MTSR…GEPL and LIRQ…PNEV.

The protein belongs to the UPF0053 family.

The protein localises to the cell membrane. The chain is UPF0053 protein YegH (yegH) from Escherichia coli (strain K12).